The sequence spans 268 residues: Tryptophan synthase alpha chain (268 aa).

Residues E49 and D60 each act as proton acceptor in the active site.

Belongs to the TrpA family. As to quaternary structure, tetramer of two alpha and two beta chains.

The enzyme catalyses (1S,2R)-1-C-(indol-3-yl)glycerol 3-phosphate + L-serine = D-glyceraldehyde 3-phosphate + L-tryptophan + H2O. It functions in the pathway amino-acid biosynthesis; L-tryptophan biosynthesis; L-tryptophan from chorismate: step 5/5. The alpha subunit is responsible for the aldol cleavage of indoleglycerol phosphate to indole and glyceraldehyde 3-phosphate. This chain is Tryptophan synthase alpha chain, found in Shigella flexneri serotype 5b (strain 8401).